The sequence spans 438 residues: Gamma-glutamyl phosphate reductase (438 aa).

The protein belongs to the gamma-glutamyl phosphate reductase family.

It is found in the cytoplasm. It catalyses the reaction L-glutamate 5-semialdehyde + phosphate + NADP(+) = L-glutamyl 5-phosphate + NADPH + H(+). It functions in the pathway amino-acid biosynthesis; L-proline biosynthesis; L-glutamate 5-semialdehyde from L-glutamate: step 2/2. Catalyzes the NADPH-dependent reduction of L-glutamate 5-phosphate into L-glutamate 5-semialdehyde and phosphate. The product spontaneously undergoes cyclization to form 1-pyrroline-5-carboxylate. The protein is Gamma-glutamyl phosphate reductase of Prochlorococcus marinus (strain NATL1A).